A 155-amino-acid polypeptide reads, in one-letter code: Vasotocin-neurophysin VT 2 (155 aa).

Residues 1–20 form the signal peptide; the sequence is MSVCAVLLLCVAGLLCLSSA. A disulfide bridge connects residues Cys21 and Cys26. Residue Gly29 is modified to Glycine amide. 7 disulfide bridges follow: Cys42–Cys86, Cys45–Cys59, Cys53–Cys76, Cys60–Cys66, Cys93–Cys106, Cys100–Cys118, and Cys107–Cys112. A compositionally biased stretch (acidic residues) spans 119 to 128; sequence SEDSESEEPA. Positions 119 to 139 are disordered; that stretch reads SEDSESEEPADQNTLGASPGE.

The protein belongs to the vasopressin/oxytocin family.

It localises to the secreted. Vasotocin is an antidiuretic hormone. The polypeptide is Vasotocin-neurophysin VT 2 (Catostomus commersonii (White sucker)).